Here is a 275-residue protein sequence, read N- to C-terminus: Dermonecrotic toxin SpaSicTox-betaIIA2 (275 aa).

The active site involves His-5. Glu-25 and Asp-27 together coordinate Mg(2+). His-41 acts as the Nucleophile in catalysis. 2 cysteine pairs are disulfide-bonded: Cys-45–Cys-51 and Cys-47–Cys-190. A Mg(2+)-binding site is contributed by Asp-85.

It belongs to the arthropod phospholipase D family. Class II subfamily. Mg(2+) serves as cofactor. As to expression, expressed by the venom gland.

It is found in the secreted. The catalysed reaction is an N-(acyl)-sphingosylphosphocholine = an N-(acyl)-sphingosyl-1,3-cyclic phosphate + choline. The enzyme catalyses an N-(acyl)-sphingosylphosphoethanolamine = an N-(acyl)-sphingosyl-1,3-cyclic phosphate + ethanolamine. It catalyses the reaction a 1-acyl-sn-glycero-3-phosphocholine = a 1-acyl-sn-glycero-2,3-cyclic phosphate + choline. It carries out the reaction a 1-acyl-sn-glycero-3-phosphoethanolamine = a 1-acyl-sn-glycero-2,3-cyclic phosphate + ethanolamine. Dermonecrotic toxins cleave the phosphodiester linkage between the phosphate and headgroup of certain phospholipids (sphingolipid and lysolipid substrates), forming an alcohol (often choline) and a cyclic phosphate. This toxin acts on sphingomyelin (SM). It may also act on ceramide phosphoethanolamine (CPE), lysophosphatidylcholine (LPC) and lysophosphatidylethanolamine (LPE), but not on lysophosphatidylserine (LPS), and lysophosphatidylglycerol (LPG). It acts by transphosphatidylation, releasing exclusively cyclic phosphate products as second products. Induces dermonecrosis, hemolysis, increased vascular permeability, edema, inflammatory response, and platelet aggregation. In Sicarius patagonicus (Six-eyed sand spider), this protein is Dermonecrotic toxin SpaSicTox-betaIIA2.